Here is a 475-residue protein sequence, read N- to C-terminus: BTB/POZ domain-containing protein 10 (475 aa).

A disordered region spans residues 1 to 143; sequence MAGRPHPYDG…SSQSSSDGSC (143 aa). Basic residues predominate over residues 22–31; sequence LHSRPRKLYK. The span at 57–80 shows a compositional bias: basic and acidic residues; the sequence is GHERSRDRRRSSDRSRDSSHERTE. Over residues 81–94 the composition is skewed to polar residues; it reads SQLTPCIRNVTSPT. The segment covering 97 to 107 has biased composition (basic and acidic residues); the sequence is HHVEREKDHSS. Positions 108–142 are enriched in low complexity; sequence SRPSSPRPQKASPNGSISSAGNSSRNSSQSSSDGS. Residues 146-475 are interaction with AKT family members; it reads AGEMVFVYEN…LDPDAQNPTL (330 aa). Residues 167 to 241 enclose the BTB domain; that stretch reads ERVTLIVDNT…YKTGIIRCPD (75 aa). Residues 456–475 are disordered; it reads PIHPPSGNSDLDPDAQNPTL.

In terms of assembly, interacts (via C-terminal 330-amino-acid region) with AKT1; AKT2 and AKT3. Interacts with PPP2CA and PPP1CA.

The protein resides in the nucleus. The protein localises to the cytoplasm. Its function is as follows. Plays a major role as an activator of AKT family members by inhibiting PPP2CA-mediated dephosphorylation, thereby keeping AKTs activated. Plays a role in preventing motor neuronal death and in accelerating the growth of pancreatic beta cells. The protein is BTB/POZ domain-containing protein 10 (BTBD10) of Pongo abelii (Sumatran orangutan).